The following is a 642-amino-acid chain: Threonine--tRNA ligase (642 aa).

In terms of domain architecture, TGS spans 1-61 (MPVIRFCDGS…TEDSSISFIS (61 aa)). Residues 243 to 534 (DHRKIGKLLN…LIEEFSGKLP (292 aa)) form a catalytic region. Zn(2+) contacts are provided by C334, H385, and H511.

The protein belongs to the class-II aminoacyl-tRNA synthetase family. In terms of assembly, homodimer. Zn(2+) serves as cofactor.

Its subcellular location is the cytoplasm. The enzyme catalyses tRNA(Thr) + L-threonine + ATP = L-threonyl-tRNA(Thr) + AMP + diphosphate + H(+). Functionally, catalyzes the attachment of threonine to tRNA(Thr) in a two-step reaction: L-threonine is first activated by ATP to form Thr-AMP and then transferred to the acceptor end of tRNA(Thr). Also edits incorrectly charged L-seryl-tRNA(Thr). The sequence is that of Threonine--tRNA ligase from Buchnera aphidicola subsp. Schizaphis graminum (strain Sg).